The following is a 453-amino-acid chain: tRNA modification GTPase MnmE (453 aa).

Residues arginine 22, glutamate 79, and lysine 119 each coordinate (6S)-5-formyl-5,6,7,8-tetrahydrofolate. The region spanning 215-376 (GMKVVIAGRP…LKQHLKSLMG (162 aa)) is the TrmE-type G domain. Asparagine 225 is a K(+) binding site. Residues 225-230 (NAGKSS), 244-250 (TDIAGTT), 269-272 (DTAG), and 334-337 (NKAD) contribute to the GTP site. Serine 229 is a binding site for Mg(2+). K(+) contacts are provided by threonine 244, isoleucine 246, and threonine 249. Mg(2+) is bound at residue threonine 250. Lysine 453 contacts (6S)-5-formyl-5,6,7,8-tetrahydrofolate.

This sequence belongs to the TRAFAC class TrmE-Era-EngA-EngB-Septin-like GTPase superfamily. TrmE GTPase family. Homodimer. Heterotetramer of two MnmE and two MnmG subunits. The cofactor is K(+).

Its subcellular location is the cytoplasm. Exhibits a very high intrinsic GTPase hydrolysis rate. Involved in the addition of a carboxymethylaminomethyl (cmnm) group at the wobble position (U34) of certain tRNAs, forming tRNA-cmnm(5)s(2)U34. In Shewanella amazonensis (strain ATCC BAA-1098 / SB2B), this protein is tRNA modification GTPase MnmE.